The following is a 146-amino-acid chain: VKWTDKERAVILGIFSGLDYEDIGPKALVRCLIVYPWTQRYFGAFGNLSSAAAISGNLKIAAHGVKVLHGLDMALQHMDNIMETYADLSILHSETLHVDPDNFKLLADCLTITIAAKMGHCFTPDTQIAFHKFLAVVVSALGKQYC.

The region spanning 2–146 (KWTDKERAVI…VVSALGKQYC (145 aa)) is the Globin domain. The heme b site is built by histidine 63 and histidine 92.

The protein belongs to the globin family. Heterotetramer of two alpha chains and two beta chains. Red blood cells.

In terms of biological role, involved in oxygen transport from gills to the various peripheral tissues. The sequence is that of Hemoglobin subunit beta-2 (hbb2) from Lycodes reticulatus (Arctic eelpout).